Here is a 138-residue protein sequence, read N- to C-terminus: ATP synthase epsilon chain (138 aa).

Belongs to the ATPase epsilon chain family. F-type ATPases have 2 components, CF(1) - the catalytic core - and CF(0) - the membrane proton channel. CF(1) has five subunits: alpha(3), beta(3), gamma(1), delta(1), epsilon(1). CF(0) has three main subunits: a, b and c.

The protein resides in the cell inner membrane. In terms of biological role, produces ATP from ADP in the presence of a proton gradient across the membrane. This Idiomarina loihiensis (strain ATCC BAA-735 / DSM 15497 / L2-TR) protein is ATP synthase epsilon chain.